Consider the following 224-residue polypeptide: GrpE protein homolog 2, mitochondrial (224 aa).

The N-terminal 31 residues, 1–31, are a transit peptide targeting the mitochondrion; the sequence is MAARLLWAVRRRMQPLAAHAASEGRGWLHPF. Lys141 bears the N6-acetyllysine mark.

Belongs to the GrpE family. As to quaternary structure, probable component of the PAM complex at least composed of a mitochondrial HSP70 protein, GRPEL1 or GRPEL2, TIMM44, TIMM16/PAM16 and TIMM14/DNAJC19.

The protein resides in the mitochondrion matrix. Functionally, essential component of the PAM complex, a complex required for the translocation of transit peptide-containing proteins from the inner membrane into the mitochondrial matrix in an ATP-dependent manner. Seems to control the nucleotide-dependent binding of mitochondrial HSP70 to substrate proteins. Stimulates ATPase activity of mt-HSP70. May also serve to modulate the interconversion of oligomeric (inactive) and monomeric (active) forms of mt-HSP70. The sequence is that of GrpE protein homolog 2, mitochondrial (GRPEL2) from Bos taurus (Bovine).